Reading from the N-terminus, the 474-residue chain is B-cell CLL/lymphoma 6 member B protein (474 aa).

The region spanning 38 to 105 (TDVTLLVGGQ…MYTSRLRLSP (68 aa)) is the BTB domain. Disordered regions lie at residues 144–190 (PVEV…PDPK) and 210–249 (GSLV…GLQS). Positions 150 to 160 (PRPPTVAPPGS) are enriched in pro residues. A compositionally biased stretch (basic and acidic residues) spans 162–172 (RRSEGHPDPPT). Composition is skewed to polar residues over residues 173 to 183 (ESRSCSQGSPS), 210 to 220 (GSLVGESSGQP), and 240 to 249 (EEGTTPGLQS). C2H2-type zinc fingers lie at residues 323–345 (YKCQ…RTVH), 351–373 (YRCS…SRIH), 379–401 (YKCE…VLIH), 407–429 (YPCP…VRIH), and 435–458 (YHCD…RQKH).

In terms of assembly, associates with BCL6 through the BTB domain. Ubiquitously expressed with higher expression found in heart and lung.

It localises to the nucleus. In terms of biological role, acts as a sequence-specific transcriptional repressor in association with BCL6. Necessary for activation of naive T-cells to antigenic stimulation. May attenuate the regulatory effect of BCL6 on antigenic activation of naive CD4 T-cells by forming a heterodimer with BCL6. This Mus musculus (Mouse) protein is B-cell CLL/lymphoma 6 member B protein (Bcl6b).